Consider the following 258-residue polypeptide: MGSRSENVGTVTREGSRVEQDDVLMDDDSDSSEYVDMWIDLFLGRKGHEYFCDVDPEYITDRFNLMNLQKTVSKFSYVVQYIVDDLDDSILENMTHARLEQLESDSRKLYGLIHARYIITIKGLQKMYAKYKEADFGRCPRVYCNLQQLLPVGLHDIPGIDCVKLYCPSCEDLYIPKSSRHSSIDGAYFGTSFPGMFLQAFPDMVPKHPTKRYVPKIFGFELHKQAQLTRWQELQRLKLVEKLESKDVDLTKSGGFKT.

The segment covering 1-10 (MGSRSENVGT) has biased composition (polar residues). The disordered stretch occupies residues 1–29 (MGSRSENVGTVTREGSRVEQDDVLMDDDS).

This sequence belongs to the casein kinase 2 subunit beta family. In terms of assembly, tetramer composed of an alpha subunit, an alpha' subunit, one beta subunit and one beta' subunit. Interacts with FACT subunits POB3 and SPT16. Interaction with YTA7. Phosphorylated by alpha subunit. Post-translationally, the N-terminus is blocked.

Functionally, regulatory subunit of casein kinase II/CK2. As part of the kinase complex regulates the basal catalytic activity of the alpha subunit a constitutively active serine/threonine-protein kinase that phosphorylates a large number of substrates containing acidic residues C-terminal to the phosphorylated serine or threonine. The chain is Casein kinase II subunit beta' from Saccharomyces cerevisiae (strain ATCC 204508 / S288c) (Baker's yeast).